Consider the following 369-residue polypeptide: Small RNA 2'-O-methyltransferase (369 aa).

3 residues coordinate S-adenosyl-L-methionine: Ser-39, Asp-57, and Ser-93. The Mg(2+) site is built by Glu-111, Glu-114, His-115, and His-161.

Belongs to the methyltransferase superfamily. HEN1 family. Requires Mg(2+) as cofactor.

It localises to the cytoplasm. The enzyme catalyses small RNA 3'-end nucleotide + S-adenosyl-L-methionine = small RNA 3'-end 2'-O-methylnucleotide + S-adenosyl-L-homocysteine + H(+). Its function is as follows. Methyltransferase that adds a 2'-O-methyl group at the 3'-end of piRNAs, a class of 24 to 30 nucleotide RNAs that are generated by a Dicer-independent mechanism and are primarily derived from transposons and other repeated sequence elements. This probably protects the 3'-end of piRNAs from uridylation activity and subsequent degradation. Stabilization of piRNAs is essential for gametogenesis. The sequence is that of Small RNA 2'-O-methyltransferase (henmt1) from Xenopus tropicalis (Western clawed frog).